Reading from the N-terminus, the 37-residue chain is Large ribosomal subunit protein bL36c (37 aa).

The protein belongs to the bacterial ribosomal protein bL36 family.

It is found in the plastid. The protein resides in the chloroplast. The sequence is that of Large ribosomal subunit protein bL36c from Angiopteris evecta (Mule's foot fern).